The following is a 308-amino-acid chain: 4-diphosphocytidyl-2-C-methyl-D-erythritol kinase (308 aa).

K24 is a catalytic residue. 118-128 (PVGAGMAGGSA) lines the ATP pocket. D160 is a catalytic residue.

This sequence belongs to the GHMP kinase family. IspE subfamily.

It carries out the reaction 4-CDP-2-C-methyl-D-erythritol + ATP = 4-CDP-2-C-methyl-D-erythritol 2-phosphate + ADP + H(+). It participates in isoprenoid biosynthesis; isopentenyl diphosphate biosynthesis via DXP pathway; isopentenyl diphosphate from 1-deoxy-D-xylulose 5-phosphate: step 3/6. Its function is as follows. Catalyzes the phosphorylation of the position 2 hydroxy group of 4-diphosphocytidyl-2C-methyl-D-erythritol. The chain is 4-diphosphocytidyl-2-C-methyl-D-erythritol kinase from Bifidobacterium adolescentis (strain ATCC 15703 / DSM 20083 / NCTC 11814 / E194a).